An 863-amino-acid chain; its full sequence is Leucine--tRNA ligase (863 aa).

Positions 42-52 (PYPSGKIHMGH) match the 'HIGH' region motif. Positions 618–622 (KMSKS) match the 'KMSKS' region motif. K621 is a binding site for ATP.

It belongs to the class-I aminoacyl-tRNA synthetase family.

It is found in the cytoplasm. It carries out the reaction tRNA(Leu) + L-leucine + ATP = L-leucyl-tRNA(Leu) + AMP + diphosphate. This Desulfatibacillum aliphaticivorans protein is Leucine--tRNA ligase.